Consider the following 336-residue polypeptide: MFAPIIAIDAMGGDFGPHCVVPASIAFLAENPSSQLILVGQPALLEELLSRHPSLDRQRLRVHAASEVIGSDERPSQALRGKPDASMRVALELVRDGCAQACVSAGNTGALMALSRHLLKTLPGIDRPAMVTAVPTEKGHCHLLDLGANVDCSAEHLYQFAVMGAVAAEALGCASPRVALLNVGVEEIKGNQQVKLAASLLQKAEGLNFAGYIEGDGLYRGEADVVVCDGFVGNILLKASEGLAAMVSARIEQRFRDGLAAKLVGALALPLLRRLRGDIAPARYNGASFLGLQGIVVKSHGSAAEEGFQSALRRAALEVRENLPQRLHGRLEHLLL.

It belongs to the PlsX family. Homodimer. Probably interacts with PlsY.

The protein resides in the cytoplasm. It catalyses the reaction a fatty acyl-[ACP] + phosphate = an acyl phosphate + holo-[ACP]. The protein operates within lipid metabolism; phospholipid metabolism. Functionally, catalyzes the reversible formation of acyl-phosphate (acyl-PO(4)) from acyl-[acyl-carrier-protein] (acyl-ACP). This enzyme utilizes acyl-ACP as fatty acyl donor, but not acyl-CoA. This chain is Phosphate acyltransferase, found in Pseudomonas paraeruginosa (strain DSM 24068 / PA7) (Pseudomonas aeruginosa (strain PA7)).